Consider the following 252-residue polypeptide: 5'-nucleotidase SurE (252 aa).

A divalent metal cation contacts are provided by Asp8, Asp9, Ser40, and Asn92.

This sequence belongs to the SurE nucleotidase family. It depends on a divalent metal cation as a cofactor.

It localises to the cytoplasm. The catalysed reaction is a ribonucleoside 5'-phosphate + H2O = a ribonucleoside + phosphate. In terms of biological role, nucleotidase that shows phosphatase activity on nucleoside 5'-monophosphates. In Chelativorans sp. (strain BNC1), this protein is 5'-nucleotidase SurE.